The following is a 424-amino-acid chain: CinA-like protein (424 aa).

The protein belongs to the CinA family.

The protein is CinA-like protein of Nostoc sp. (strain PCC 7120 / SAG 25.82 / UTEX 2576).